The primary structure comprises 300 residues: Probable L-serine dehydratase, alpha chain (300 aa).

The protein belongs to the iron-sulfur dependent L-serine dehydratase family. As to quaternary structure, heterodimer of an alpha chain and a beta chain. [4Fe-4S] cluster is required as a cofactor.

The enzyme catalyses L-serine = pyruvate + NH4(+). The protein operates within carbohydrate biosynthesis; gluconeogenesis. The protein is Probable L-serine dehydratase, alpha chain (sdaAA) of Bacillus subtilis (strain 168).